A 127-amino-acid chain; its full sequence is PRA1 family protein C (127 aa).

Helical transmembrane passes span 15–35, 53–73, and 76–96; these read IFIS…LIVA, VIDD…IFLL, and VSRG…VHGM.

The protein belongs to the PRA1 family.

It localises to the endoplasmic reticulum membrane. May be involved in both secretory and endocytic intracellular trafficking in the endosomal/prevacuolar compartments. This is PRA1 family protein C (PRA1C) from Arabidopsis thaliana (Mouse-ear cress).